The following is a 364-amino-acid chain: Ribosomal RNA large subunit methyltransferase M (364 aa).

Residues serine 187, 220-223, aspartate 239, aspartate 259, and aspartate 276 each bind S-adenosyl-L-methionine; that span reads CPGG. The active-site Proton acceptor is the lysine 305.

The protein belongs to the class I-like SAM-binding methyltransferase superfamily. RNA methyltransferase RlmE family. RlmM subfamily. As to quaternary structure, monomer.

It is found in the cytoplasm. It carries out the reaction cytidine(2498) in 23S rRNA + S-adenosyl-L-methionine = 2'-O-methylcytidine(2498) in 23S rRNA + S-adenosyl-L-homocysteine + H(+). Functionally, catalyzes the 2'-O-methylation at nucleotide C2498 in 23S rRNA. The protein is Ribosomal RNA large subunit methyltransferase M of Aeromonas salmonicida (strain A449).